Here is a 288-residue protein sequence, read N- to C-terminus: Polyamine aminopropyltransferase (288 aa).

A PABS domain is found at 9–238; the sequence is ETLHDQFGQY…GIMTFAWATD (230 aa). Position 33 (Gln-33) interacts with S-methyl-5'-thioadenosine. His-64 and Asp-88 together coordinate spermidine. S-methyl-5'-thioadenosine contacts are provided by residues Glu-108 and 140–141; that span reads DG. Asp-158 acts as the Proton acceptor in catalysis. Spermidine is bound at residue 158–161; sequence DCTD. An S-methyl-5'-thioadenosine-binding site is contributed by Pro-165.

It belongs to the spermidine/spermine synthase family. In terms of assembly, homodimer or homotetramer.

The protein resides in the cytoplasm. It carries out the reaction S-adenosyl 3-(methylsulfanyl)propylamine + putrescine = S-methyl-5'-thioadenosine + spermidine + H(+). The protein operates within amine and polyamine biosynthesis; spermidine biosynthesis; spermidine from putrescine: step 1/1. Catalyzes the irreversible transfer of a propylamine group from the amino donor S-adenosylmethioninamine (decarboxy-AdoMet) to putrescine (1,4-diaminobutane) to yield spermidine. The chain is Polyamine aminopropyltransferase from Escherichia coli O81 (strain ED1a).